A 187-amino-acid chain; its full sequence is Protein TIFY 11b (187 aa).

Residues 68 to 103 (ATAPAAPLTIFYGGRMVVFEDFPADKAAEVMRMASS) enclose the Tify domain. The Jas signature appears at 121 to 145 (PIMRKASLQRFFAKRKDRLAATTPY). Positions 123–130 (MRKASLQR) match the Nuclear localization signal motif. Positions 139–168 (LAATTPYARPSPAETKASEPEEKKTPTSWL) are disordered. Residues 154-163 (KASEPEEKKT) show a composition bias toward basic and acidic residues.

This sequence belongs to the TIFY/JAZ family. In terms of assembly, interacts with COI1B in a coronatine-dependent manner. Coronatine is an analog of jasmonoyl isoleucine (JA-Ile). In terms of processing, ubiquitinated. Targeted for degradation by the SCF(COI1) E3 ubiquitin ligase-proteasome pathway during jasmonate signaling.

Its subcellular location is the nucleus. Functionally, repressor of jasmonate responses. The sequence is that of Protein TIFY 11b from Oryza sativa subsp. japonica (Rice).